A 469-amino-acid chain; its full sequence is MAPLSLRDCKAWQDAGLTLSTTSNEVCKLFDATLIQYATWKNDSTLGGIEGCLSRINNTDPNFVMGHVAANGLELIGTGRSPLVDKELDDALKTMSDLSKSQALTEREKLHVAAVETFADGNLPKAADLWERILQSHPTDLLALKFAHDCYFYLGEQRQMRDSVARVLPYWKPETPLSSYVKGMYSFGLLETNFYDQALKVAKEALAVERTDSWSVHTIAHVHEMKADLDSGLSFMQETENNWKGSDMLACHVYWHWALYLIEKGDYEAALTLYDNHIAPQCFASGSMLDVVDNSSMLYRLQMEGVNVGDRWKNLVQITKKHTKDHMLIFNDLHFLMSSLGSKDEDTTRQLVESMQELSKSPGEKQQHSLIKHLGAPLCQALIEYNGGNYDKAVDLIYPIRYQILKIGGSDAQRDLFNQVLIQAAINSDSTHHQNLARVLLMERDIGRPNSPLTQRLIKKWEALHGLLG.

TPR repeat units follow at residues 107–140, 179–212, and 251–284; these read REKLHVAAVETFADGNLPKAADLWERILQSHPTD, SYVKGMYSFGLLETNFYDQALKVAKEALAVERTD, and CHVYWHWALYLIEKGDYEAALTLYDNHIAPQCFA.

This sequence belongs to the TTC38 family.

The chain is Tetratricopeptide repeat protein 38 (ttc38) from Xenopus laevis (African clawed frog).